The following is a 201-amino-acid chain: 3-isopropylmalate dehydratase small subunit (201 aa).

The protein belongs to the LeuD family. LeuD type 1 subfamily. As to quaternary structure, heterodimer of LeuC and LeuD.

It catalyses the reaction (2R,3S)-3-isopropylmalate = (2S)-2-isopropylmalate. It functions in the pathway amino-acid biosynthesis; L-leucine biosynthesis; L-leucine from 3-methyl-2-oxobutanoate: step 2/4. In terms of biological role, catalyzes the isomerization between 2-isopropylmalate and 3-isopropylmalate, via the formation of 2-isopropylmaleate. The protein is 3-isopropylmalate dehydratase small subunit of Mesorhizobium japonicum (strain LMG 29417 / CECT 9101 / MAFF 303099) (Mesorhizobium loti (strain MAFF 303099)).